A 144-amino-acid chain; its full sequence is Large ribosomal subunit protein uL13 (144 aa).

The protein belongs to the universal ribosomal protein uL13 family. As to quaternary structure, part of the 50S ribosomal subunit.

In terms of biological role, this protein is one of the early assembly proteins of the 50S ribosomal subunit, although it is not seen to bind rRNA by itself. It is important during the early stages of 50S assembly. This is Large ribosomal subunit protein uL13 from Clostridium tetani (strain Massachusetts / E88).